Consider the following 272-residue polypeptide: Shikimate dehydrogenase (NADP(+)) (272 aa).

Shikimate-binding positions include 14-16 and threonine 61; that span reads SKS. Lysine 65 functions as the Proton acceptor in the catalytic mechanism. Glutamate 77 lines the NADP(+) pocket. Positions 86 and 102 each coordinate shikimate. NADP(+) contacts are provided by residues 126 to 130, 149 to 154, and methionine 213; these read GAGGA and NRTASR. Tyrosine 215 contributes to the shikimate binding site. Residue glycine 237 coordinates NADP(+).

Belongs to the shikimate dehydrogenase family. In terms of assembly, homodimer.

The enzyme catalyses shikimate + NADP(+) = 3-dehydroshikimate + NADPH + H(+). Its pathway is metabolic intermediate biosynthesis; chorismate biosynthesis; chorismate from D-erythrose 4-phosphate and phosphoenolpyruvate: step 4/7. Its function is as follows. Involved in the biosynthesis of the chorismate, which leads to the biosynthesis of aromatic amino acids. Catalyzes the reversible NADPH linked reduction of 3-dehydroshikimate (DHSA) to yield shikimate (SA). This chain is Shikimate dehydrogenase (NADP(+)), found in Salmonella typhimurium (strain LT2 / SGSC1412 / ATCC 700720).